We begin with the raw amino-acid sequence, 506 residues long: uncharacterized protein (506 aa).

It belongs to the Mg-chelatase subunits D/I family. ComM subfamily.

This is an uncharacterized protein from Salmonella typhimurium (strain LT2 / SGSC1412 / ATCC 700720).